The primary structure comprises 461 residues: Elongation factor 1-alpha (461 aa).

N,N,N-trimethylglycine is present on Gly-2. A tr-type G domain is found at 5–242 (KIHINIVVIG…DAILPPSRPT (238 aa)). The interval 14–21 (GHVDSGKS) is G1. 14–21 (GHVDSGKS) is a binding site for GTP. Residues 70 to 74 (GITID) are G2. Positions 91–94 (DAPG) are G3. Residues 153-156 (NKMD) and 194-196 (SGW) contribute to the GTP site. Positions 153–156 (NKMD) are G4. Positions 194-196 (SGW) are G5. 5-glutamyl glycerylphosphorylethanolamine occurs at positions 301 and 374.

The protein belongs to the TRAFAC class translation factor GTPase superfamily. Classic translation factor GTPase family. EF-Tu/EF-1A subfamily.

The protein localises to the cytoplasm. The catalysed reaction is GTP + H2O = GDP + phosphate + H(+). Functionally, translation elongation factor that catalyzes the GTP-dependent binding of aminoacyl-tRNA (aa-tRNA) to the A-site of ribosomes during the elongation phase of protein synthesis. Base pairing between the mRNA codon and the aa-tRNA anticodon promotes GTP hydrolysis, releasing the aa-tRNA from EEF1A1 and allowing its accommodation into the ribosome. The growing protein chain is subsequently transferred from the P-site peptidyl tRNA to the A-site aa-tRNA, extending it by one amino acid through ribosome-catalyzed peptide bond formation. This is Elongation factor 1-alpha (eef1a) from Oryzias latipes (Japanese rice fish).